The sequence spans 227 residues: Cytidylate kinase (227 aa).

Position 12 to 20 (12 to 20 (GPSGAGKGT)) interacts with ATP.

The protein belongs to the cytidylate kinase family. Type 1 subfamily.

Its subcellular location is the cytoplasm. The enzyme catalyses CMP + ATP = CDP + ADP. The catalysed reaction is dCMP + ATP = dCDP + ADP. The polypeptide is Cytidylate kinase (Salmonella arizonae (strain ATCC BAA-731 / CDC346-86 / RSK2980)).